An 875-amino-acid chain; its full sequence is MTLARFVLALVLGALPEVVGFDSVLNDSLHHRHRHSPPPGPQYPYYLPTHQRPPRTRPPPPLPRFSRPPRALLAQRPHALQAGHTPRRHPWGCPPGEPWVSVTDFGAPCLRWAEVPPFLERSPPASWAQLRGQRHNFCRSPDGPGRPWCFYGDARGKVDWGYCDCRHGSVRLRGGKNEFEGTVEVYASGVWGTVCSSHWDDSDASVICHQLQLGGKGIAKQTPFSGLGLIPIYWSNVRCRGDEENILLCEKDIWQXGVCPQKMAAAVTCSFSHGPAFPIIRLVGGNSVHEGRVELYHAGQWGTVCDDQWDDADAEVICRQLGLSGIAKAWHQAYFGEGSGPVMLDEVRCTGNELSIEQCPKSSWGEHNCGHKEDAGVSCTPLTDGVIRLAGGKGSHEGRLEVYYRGQWGTVCDDGWTELNTYVACRQLGFKYGKQASANHFEESTGPIWLDDVSCSGKETRFLQCSRRQWGRHDCSHREDVSIACYPGSEGHRLSLGFPVRLMDGENKKEGRVEVFINGQWGTICDDGWTDKDAAVICRQLGYKGPARARTMAYFGEGKGPIHVDNVKCTGNERSLADCIKQDIGRHNCRHSEDAGVICDYFGKKASGNSNKESLSSVCGLRLLHRRQKRIIGGKNSLRGGWPWQVSLRLKSSHGDGRLLCGATLLSSCWVLTAAHCFKRYGNSTRNYAVRVGDYHTLVPEEFEEEIGVQQIVIHREYRPDSSDYDIALVRLQGPEEQCARFSSHVLPACLPFWRERPQKTASNCYITGWGDTGRAYSRTLQQAAIPLLPKRFCEERYKGRFTGRMLCAGNLHEHKRVDSCQGDSGGPLMCERPGESWAVYGVTSWGYGCGVKDSPGVYTKVSAFVPWIKSVTKL.

Positions Met1–Gly20 are cleaved as a signal peptide. Asn26 carries an N-linked (GlcNAc...) asparagine glycan. A disordered region spans residues Leu29–Pro68. The Kringle domain occupies Cys93–Cys165. 20 disulfides stabilise this stretch: Cys93/Cys165, Cys109/Cys149, Cys138/Cys163, Cys195/Cys259, Cys208/Cys269, Cys239/Cys249, Cys305/Cys369, Cys318/Cys379, Cys349/Cys359, Cys412/Cys475, Cys425/Cys485, Cys455/Cys465, Cys525/Cys589, Cys538/Cys599, Cys569/Cys579, Cys619/Cys750, Cys661/Cys677, Cys765/Cys831, Cys794/Cys808, and Cys821/Cys850. 4 consecutive SRCR domains span residues Val170 to Phe271, Ile280 to Pro381, Ile387 to Pro487, and Val500 to Tyr601. Positions Cys619–Arg630 are zymogen activation region. The region spanning Ile631–Lys874 is the Peptidase S1 domain. The active-site Charge relay system is the His676. A glycan (N-linked (GlcNAc...) asparagine) is linked at Asn683. The Charge relay system role is filled by Asp726. The active-site Charge relay system is Ser825.

It belongs to the peptidase S1 family.

It localises to the secreted. Functionally, plays a role in neuronal plasticity and the proteolytic action may subserve structural reorganizations associated with learning and memory operations. In Trachypithecus phayrei (Phayre's leaf monkey), this protein is Neurotrypsin (PRSS12).